Here is a 423-residue protein sequence, read N- to C-terminus: Serine hydroxymethyltransferase (423 aa).

Residues L121 and 125–127 (GHL) each bind (6S)-5,6,7,8-tetrahydrofolate. Position 230 is an N6-(pyridoxal phosphate)lysine (K230). 355 to 357 (SPF) is a (6S)-5,6,7,8-tetrahydrofolate binding site.

This sequence belongs to the SHMT family. Homodimer. Requires pyridoxal 5'-phosphate as cofactor.

The protein localises to the cytoplasm. The enzyme catalyses (6R)-5,10-methylene-5,6,7,8-tetrahydrofolate + glycine + H2O = (6S)-5,6,7,8-tetrahydrofolate + L-serine. It functions in the pathway one-carbon metabolism; tetrahydrofolate interconversion. The protein operates within amino-acid biosynthesis; glycine biosynthesis; glycine from L-serine: step 1/1. In terms of biological role, catalyzes the reversible interconversion of serine and glycine with tetrahydrofolate (THF) serving as the one-carbon carrier. This reaction serves as the major source of one-carbon groups required for the biosynthesis of purines, thymidylate, methionine, and other important biomolecules. Also exhibits THF-independent aldolase activity toward beta-hydroxyamino acids, producing glycine and aldehydes, via a retro-aldol mechanism. The sequence is that of Serine hydroxymethyltransferase from Hydrogenovibrio crunogenus (strain DSM 25203 / XCL-2) (Thiomicrospira crunogena).